A 97-amino-acid polypeptide reads, in one-letter code: MKIEVNKNLIKHLENLSLIQLSQNEEKMLENDITNIIKFFEKINELDLSNVEPLFHPLPQGRLRKDTPRDPLDRENALKNVKRKENGYIVGPRTYGE.

The tract at residues 58–78 (LPQGRLRKDTPRDPLDRENAL) is disordered. Residues 63–77 (LRKDTPRDPLDRENA) are compositionally biased toward basic and acidic residues.

This sequence belongs to the GatC family. As to quaternary structure, heterotrimer of A, B and C subunits.

It carries out the reaction L-glutamyl-tRNA(Gln) + L-glutamine + ATP + H2O = L-glutaminyl-tRNA(Gln) + L-glutamate + ADP + phosphate + H(+). The catalysed reaction is L-aspartyl-tRNA(Asn) + L-glutamine + ATP + H2O = L-asparaginyl-tRNA(Asn) + L-glutamate + ADP + phosphate + 2 H(+). Functionally, allows the formation of correctly charged Asn-tRNA(Asn) or Gln-tRNA(Gln) through the transamidation of misacylated Asp-tRNA(Asn) or Glu-tRNA(Gln) in organisms which lack either or both of asparaginyl-tRNA or glutaminyl-tRNA synthetases. The reaction takes place in the presence of glutamine and ATP through an activated phospho-Asp-tRNA(Asn) or phospho-Glu-tRNA(Gln). The sequence is that of Aspartyl/glutamyl-tRNA(Asn/Gln) amidotransferase subunit C from Saccharolobus islandicus (strain Y.N.15.51 / Yellowstone #2) (Sulfolobus islandicus).